The chain runs to 578 residues: Isocitrate dehydrogenase kinase/phosphatase (578 aa).

ATP-binding positions include 315–321 and Lys-336; that span reads APGIRGM. Residue Asp-371 is part of the active site.

This sequence belongs to the AceK family.

The protein resides in the cytoplasm. The enzyme catalyses L-seryl-[isocitrate dehydrogenase] + ATP = O-phospho-L-seryl-[isocitrate dehydrogenase] + ADP + H(+). Its function is as follows. Bifunctional enzyme which can phosphorylate or dephosphorylate isocitrate dehydrogenase (IDH) on a specific serine residue. This is a regulatory mechanism which enables bacteria to bypass the Krebs cycle via the glyoxylate shunt in response to the source of carbon. When bacteria are grown on glucose, IDH is fully active and unphosphorylated, but when grown on acetate or ethanol, the activity of IDH declines drastically concomitant with its phosphorylation. The sequence is that of Isocitrate dehydrogenase kinase/phosphatase from Shigella boydii serotype 18 (strain CDC 3083-94 / BS512).